The following is a 515-amino-acid chain: Hopanoid C-3 methylase (515 aa).

The region spanning 8-141 (PSPLMYTKVF…ETLARRGNID (134 aa)) is the B12-binding domain. The 215-residue stretch at 181–395 (GTLDPCASIE…DIQHAVLPTR (215 aa)) folds into the Radical SAM core domain. The [4Fe-4S] cluster site is built by C195, C199, and C202.

This sequence belongs to the radical SAM superfamily. The cofactor is [4Fe-4S] cluster.

Its function is as follows. Required for methylation of hopanoids at the C-3 position. The sequence is that of Hopanoid C-3 methylase from Methylococcus capsulatus (strain ATCC 33009 / NCIMB 11132 / Bath).